Reading from the N-terminus, the 105-residue chain is Small ribosomal subunit protein uS17 (105 aa).

This sequence belongs to the universal ribosomal protein uS17 family. In terms of assembly, part of the 30S ribosomal subunit. Contacts protein S12.

In terms of biological role, one of the primary rRNA binding proteins, it binds directly to 16S rRNA where it helps nucleate assembly of the platform and body of the 30S subunit by bringing together and stabilizing interactions between several different RNA helices. The combined cluster of proteins S8, S12 and S17 appears to hold together the shoulder and platform of the 30S subunit. In Thermus thermophilus (strain ATCC 27634 / DSM 579 / HB8), this protein is Small ribosomal subunit protein uS17.